A 183-amino-acid chain; its full sequence is Ribosome maturation factor RimM (183 aa).

The PRC barrel domain maps to 105–181 (ANEYHLMDLI…RIEIDPPLGL (77 aa)).

The protein belongs to the RimM family. In terms of assembly, binds ribosomal protein uS19.

It localises to the cytoplasm. In terms of biological role, an accessory protein needed during the final step in the assembly of 30S ribosomal subunit, possibly for assembly of the head region. Essential for efficient processing of 16S rRNA. May be needed both before and after RbfA during the maturation of 16S rRNA. It has affinity for free ribosomal 30S subunits but not for 70S ribosomes. The sequence is that of Ribosome maturation factor RimM from Thermosynechococcus vestitus (strain NIES-2133 / IAM M-273 / BP-1).